Here is a 791-residue protein sequence, read N- to C-terminus: GDH/6PGL endoplasmic bifunctional protein (791 aa).

Positions 1 to 19 (MWNMLIVAMCLALLGCLQA) are cleaved as a signal peptide. Residue Gln20 is modified to Pyrrolidone carboxylic acid. Residues 20 to 526 (QELQGHVSII…SGRLFFSQQQ (507 aa)) form a hexose-6-phosphate dehydrogenase region. NADP(+) is bound by residues 32-39 (GATGDLAK) and Tyr149. A glycan (N-linked (GlcNAc...) asparagine) is linked at Asn157. Lys174 is a binding site for NADP(+). D-glucose 6-phosphate is bound by residues Lys174, 204 to 208 (HYLGK), Glu243, and Asp262. Lys208 is modified (N6-succinyllysine). His267 (proton acceptor) is an active-site residue. Asn282 is a glycosylation site (N-linked (GlcNAc...) asparagine). Residues Lys360 and Arg365 each coordinate D-glucose 6-phosphate. Arg370 contacts NADP(+). The segment at 527 to 540 (PEQLVPGPGPAPMP) is linker. Positions 541 to 791 (SDFQVLRAKY…WYMDYDAFLG (251 aa)) are 6-phosphogluconolactonase. Residue Trp617 coordinates NADP(+). The N-linked (GlcNAc...) asparagine glycan is linked to Asn683.

This sequence in the N-terminal section; belongs to the glucose-6-phosphate dehydrogenase family. It in the C-terminal section; belongs to the glucosamine/galactosamine-6-phosphate isomerase family. 6-phosphogluconolactonase subfamily. Homodimer. Present in most tissues examined, strongest in liver.

It is found in the endoplasmic reticulum lumen. It catalyses the reaction D-glucose 6-phosphate + NADP(+) = 6-phospho-D-glucono-1,5-lactone + NADPH + H(+). The enzyme catalyses D-glucose 6-phosphate + NAD(+) = 6-phospho-D-glucono-1,5-lactone + NADH + H(+). The catalysed reaction is 6-phospho-D-glucono-1,5-lactone + H2O = 6-phospho-D-gluconate + H(+). It carries out the reaction 2-deoxy-D-glucose 6-phosphate + NAD(+) = 2-deoxy-6-phospho-D-glucono-1,5-lactone + NADH + H(+). It catalyses the reaction 2-deoxy-D-glucose 6-phosphate + NADP(+) = 2-deoxy-6-phospho-D-glucono-1,5-lactone + NADPH + H(+). The enzyme catalyses D-galactose 6-phosphate + NADP(+) = 6-phospho-D-galactono-1,5-lactone + NADPH + H(+). The catalysed reaction is D-galactose 6-phosphate + NAD(+) = 6-phospho-D-galactono-1,5-lactone + NADH + H(+). It carries out the reaction D-glucosamine 6-phosphate + NADP(+) = 2-amino-2-deoxy-6-phospho-D-glucono-1,5-lactone + NADPH + 2 H(+). It catalyses the reaction D-glucose + NAD(+) = D-glucono-1,5-lactone + NADH + H(+). The enzyme catalyses D-glucose + NADP(+) = D-glucono-1,5-lactone + NADPH + H(+). The catalysed reaction is D-glucose 6-sulfate + NADP(+) = 6-sulfo-D-glucono-1,5-lactone + NADPH + H(+). The protein operates within carbohydrate degradation; pentose phosphate pathway; D-ribulose 5-phosphate from D-glucose 6-phosphate (oxidative stage): step 1/3. Its pathway is carbohydrate degradation; pentose phosphate pathway; D-ribulose 5-phosphate from D-glucose 6-phosphate (oxidative stage): step 2/3. It functions in the pathway carbohydrate degradation; pentose phosphate pathway; D-ribulose 5-phosphate from D-glucose 6-phosphate (oxidative stage). In terms of biological role, bifunctional enzyme localized in the lumen of the endoplasmic reticulum that catalyzes the first two steps of the oxidative branch of the pentose phosphate pathway/shunt, an alternative to glycolysis and a major source of reducing power and metabolic intermediates for biosynthetic processes. Has a hexose-6-phosphate dehydrogenase activity, with broad substrate specificity compared to glucose-6-phosphate 1-dehydrogenase/G6PD, and catalyzes the first step of the pentose phosphate pathway. In addition, acts as a 6-phosphogluconolactonase and catalyzes the second step of the pentose phosphate pathway. May have a dehydrogenase activity for alternative substrates including glucosamine 6-phosphate and glucose 6-sulfate. The main function of this enzyme is to provide reducing equivalents such as NADPH to maintain the adequate levels of reductive cofactors in the oxidizing environment of the endoplasmic reticulum. By producing NADPH that is needed by reductases of the lumen of the endoplasmic reticulum like corticosteroid 11-beta-dehydrogenase isozyme 1/HSD11B1, indirectly regulates their activity. This Homo sapiens (Human) protein is GDH/6PGL endoplasmic bifunctional protein.